We begin with the raw amino-acid sequence, 264 residues long: ATP synthase subunit a (264 aa).

Helical transmembrane passes span 39 to 59 (LDTL…FYII), 97 to 117 (VAPL…MDLV), 139 to 159 (TADP…VVFY), 205 to 225 (LFGN…LPWW), and 239 to 259 (LLVI…YISL).

The protein belongs to the ATPase A chain family. As to quaternary structure, F-type ATPases have 2 components, CF(1) - the catalytic core - and CF(0) - the membrane proton channel. CF(1) has five subunits: alpha(3), beta(3), gamma(1), delta(1), epsilon(1). CF(0) has three main subunits: a(1), b(2) and c(9-12). The alpha and beta chains form an alternating ring which encloses part of the gamma chain. CF(1) is attached to CF(0) by a central stalk formed by the gamma and epsilon chains, while a peripheral stalk is formed by the delta and b chains.

Its subcellular location is the cell inner membrane. Its function is as follows. Key component of the proton channel; it plays a direct role in the translocation of protons across the membrane. The chain is ATP synthase subunit a from Coxiella burnetii (strain CbuG_Q212) (Coxiella burnetii (strain Q212)).